We begin with the raw amino-acid sequence, 623 residues long: Putative chaperone protein ClpB2, chloroplastic (623 aa).

Positions 1 to 123 (MNDLKFDPNV…KSEVEKLRGE (123 aa)) constitute a Clp R domain. 2 repeat regions span residues 6–71 (FDPN…NQSL) and 77–123 (RNLG…LRGE). The tract at residues 129-375 (LKTYGTDLVE…HVKAQLDIQP (247 aa)) is i. 172–179 (GEPGVGKT) provides a ligand contact to ATP. Residues 368–462 (KAQLDIQPEE…LQEAERQHDV (95 aa)) adopt a coiled-coil conformation. 571-578 (GPTGVGKT) provides a ligand contact to ATP.

It belongs to the ClpA/ClpB family.

This is Putative chaperone protein ClpB2, chloroplastic (CLPB2) from Arabidopsis thaliana (Mouse-ear cress).